The chain runs to 556 residues: Putative cysteine ligase BshC (556 aa).

2 coiled-coil regions span residues 408–442 (ILQKHELTLDDAFHRLDDLRQELLEREDRLGIAQA) and 468–513 (LGQV…ANLT).

It belongs to the BshC family.

In terms of biological role, involved in bacillithiol (BSH) biosynthesis. May catalyze the last step of the pathway, the addition of cysteine to glucosamine malate (GlcN-Mal) to generate BSH. The sequence is that of Putative cysteine ligase BshC from Symbiobacterium thermophilum (strain DSM 24528 / JCM 14929 / IAM 14863 / T).